A 240-amino-acid polypeptide reads, in one-letter code: ATP synthase subunit a (240 aa).

5 consecutive transmembrane segments (helical) span residues 21–41, 83–103, 116–136, 184–204, and 207–227; these read LSSMLMLTVTAAIVFLIAMLF, AVTLLLFIFVANMLGLPFAII, DPTVTLTLSTLMVLLTHFYGV, LLGLLATLGTAGAAGMLGAAI, and LIWQGFSIFVGSIQAYIFVML.

This sequence belongs to the ATPase A chain family. In terms of assembly, F-type ATPases have 2 components, CF(1) - the catalytic core - and CF(0) - the membrane proton channel. CF(1) has five subunits: alpha(3), beta(3), gamma(1), delta(1), epsilon(1). CF(0) has three main subunits: a(1), b(2) and c(9-12). The alpha and beta chains form an alternating ring which encloses part of the gamma chain. CF(1) is attached to CF(0) by a central stalk formed by the gamma and epsilon chains, while a peripheral stalk is formed by the delta and b chains.

The protein localises to the cell membrane. Key component of the proton channel; it plays a direct role in the translocation of protons across the membrane. This is ATP synthase subunit a from Macrococcus caseolyticus (strain JCSC5402) (Macrococcoides caseolyticum).